The sequence spans 277 residues: Large ribosomal subunit protein uL2 (277 aa).

2 disordered regions span residues 37 to 59 (KNST…GGHK) and 221 to 265 (RGTA…KRTD). The segment covering 50–59 (TTRHRGGGHK) has biased composition (basic residues). Residues 229 to 241 (DHPHGGGEGRTGE) are compositionally biased toward basic and acidic residues.

This sequence belongs to the universal ribosomal protein uL2 family. As to quaternary structure, part of the 50S ribosomal subunit. Forms a bridge to the 30S subunit in the 70S ribosome.

One of the primary rRNA binding proteins. Required for association of the 30S and 50S subunits to form the 70S ribosome, for tRNA binding and peptide bond formation. It has been suggested to have peptidyltransferase activity; this is somewhat controversial. Makes several contacts with the 16S rRNA in the 70S ribosome. The chain is Large ribosomal subunit protein uL2 from Chromobacterium violaceum (strain ATCC 12472 / DSM 30191 / JCM 1249 / CCUG 213 / NBRC 12614 / NCIMB 9131 / NCTC 9757 / MK).